The primary structure comprises 430 residues: RNA-binding protein 34 (430 aa).

Disordered stretches follow at residues M1–R55, V72–E123, and E134–A153. 3 positions are modified to phosphoserine: S14, S28, and S99. Residues D23–R34 are compositionally biased toward basic and acidic residues. Positions T113 to E123 are enriched in basic and acidic residues. K151 is modified (N6-acetyllysine). RRM domains are found at residues R185–E280 and R287–N364. K242 participates in a covalent cross-link: Glycyl lysine isopeptide (Lys-Gly) (interchain with G-Cter in SUMO2). S288 carries the post-translational modification Phosphoserine. Disordered stretches follow at residues K365–E395 and K411–K430.

This sequence belongs to the RRM RBM34 family.

Its subcellular location is the nucleus. It localises to the nucleolus. The sequence is that of RNA-binding protein 34 (RBM34) from Homo sapiens (Human).